A 521-amino-acid chain; its full sequence is Glucose-1-phosphate adenylyltransferase large subunit 3, chloroplastic (521 aa).

The transit peptide at 1–61 directs the protein to the chloroplast; that stretch reads MDSCCNFSLG…RKLRPGVAYA (61 aa).

This sequence belongs to the bacterial/plant glucose-1-phosphate adenylyltransferase family. In terms of assembly, heterotetramer. As to expression, probably are expressed in roots, flowers and/or seeds.

The protein localises to the plastid. The protein resides in the chloroplast. The enzyme catalyses alpha-D-glucose 1-phosphate + ATP + H(+) = ADP-alpha-D-glucose + diphosphate. It functions in the pathway glycan biosynthesis; starch biosynthesis. Its activity is regulated as follows. Activated by 3'phosphoglycerate, inhibited by orthophosphate. Allosteric regulation. In terms of biological role, this protein plays a role in synthesis of starch. It catalyzes the synthesis of the activated glycosyl donor, ADP-glucose from Glc-1-P and ATP. This chain is Glucose-1-phosphate adenylyltransferase large subunit 3, chloroplastic (APL3), found in Arabidopsis thaliana (Mouse-ear cress).